We begin with the raw amino-acid sequence, 189 residues long: Pyridoxal 5'-phosphate synthase subunit PdxT (189 aa).

46–48 provides a ligand contact to L-glutamine; it reads GES. C78 serves as the catalytic Nucleophile. L-glutamine-binding positions include R107 and 136 to 137; that span reads IR. Active-site charge relay system residues include H173 and E175.

It belongs to the glutaminase PdxT/SNO family. In terms of assembly, in the presence of PdxS, forms a dodecamer of heterodimers. Only shows activity in the heterodimer.

It catalyses the reaction aldehydo-D-ribose 5-phosphate + D-glyceraldehyde 3-phosphate + L-glutamine = pyridoxal 5'-phosphate + L-glutamate + phosphate + 3 H2O + H(+). It carries out the reaction L-glutamine + H2O = L-glutamate + NH4(+). The protein operates within cofactor biosynthesis; pyridoxal 5'-phosphate biosynthesis. Functionally, catalyzes the hydrolysis of glutamine to glutamate and ammonia as part of the biosynthesis of pyridoxal 5'-phosphate. The resulting ammonia molecule is channeled to the active site of PdxS. The protein is Pyridoxal 5'-phosphate synthase subunit PdxT of Roseiflexus castenholzii (strain DSM 13941 / HLO8).